The sequence spans 223 residues: N-acetylmuramic acid 6-phosphate phosphatase (223 aa).

Asp-9 serves as the catalytic Nucleophile. Residues Asp-9, Asp-11, and Asp-168 each coordinate Mg(2+). Catalysis depends on Asp-11, which acts as the Proton donor.

Belongs to the HAD-like hydrolase superfamily. CbbY/CbbZ/Gph/YieH family. Phosphatase MupP subfamily. Requires Mg(2+) as cofactor.

It catalyses the reaction N-acetyl-D-muramate 6-phosphate + H2O = N-acetyl-D-muramate + phosphate. The protein operates within cell wall biogenesis; peptidoglycan recycling. In terms of biological role, specifically catalyzes the dephosphorylation of N-acetylmuramate 6-phosphate (MurNAc-6P) to MurNac. Is involved in peptidoglycan recycling as part of a cell wall recycling pathway that bypasses de novo biosynthesis of the peptidoglycan precursor UDP-MurNAc. Plays a role in intrinsic resistance to fosfomycin, which targets the de novo synthesis of UDP-MurNAc. Shows a very low activity on GlcNAc-6P, and neither alpha-1-phosphorylated MurNAc, GlcNAc, or glucose nor glucosamine-6P or glucose-6P can be used as a substrate. This is N-acetylmuramic acid 6-phosphate phosphatase from Pseudomonas putida (strain ATCC 47054 / DSM 6125 / CFBP 8728 / NCIMB 11950 / KT2440).